The chain runs to 434 residues: MTTQVVNVIGAGLAGSEAAYQIAKRGVQVRLYEMRPVRQTPAHHTDKFAELVCSNSLRANTLTNAVGVIKEEMRLMDSVIIRAADECSVPAGGALAVDRHEFAAKVTEYVKNHPNVTVMNEEITEIPEGPTIIATGPLTSPDLSAQLKELTGEDYFYFYDAAAPIVEKDSIDMNKVYLKSRYDKGEAAYLNCPMTEEEFDRFYEALIAAETVPLKEFEKEIFFEGCMPVEVMASRGRQTLVFGPMKPVGLEDPKTGKTPYAVVQLRQDDAAGTLYNIVGFQTHLKWGPQKEVLQLIPGLENAEIVRYGVMHRNTFINSPNLLRPTYQYKQRDDLFFAGQMTGVEGYVESAASGLLAGINAARLVKGEEPVVLPPVTAMGSMANYITATNAKNFQPMNANFGLFAPLEKKIKKKAERNEAYATRALETIRNFVNI.

10 to 15 contacts FAD; it reads GAGLAG.

It belongs to the MnmG family. TrmFO subfamily. Requires FAD as cofactor.

It is found in the cytoplasm. The catalysed reaction is uridine(54) in tRNA + (6R)-5,10-methylene-5,6,7,8-tetrahydrofolate + NADH + H(+) = 5-methyluridine(54) in tRNA + (6S)-5,6,7,8-tetrahydrofolate + NAD(+). It catalyses the reaction uridine(54) in tRNA + (6R)-5,10-methylene-5,6,7,8-tetrahydrofolate + NADPH + H(+) = 5-methyluridine(54) in tRNA + (6S)-5,6,7,8-tetrahydrofolate + NADP(+). Its function is as follows. Catalyzes the folate-dependent formation of 5-methyl-uridine at position 54 (M-5-U54) in all tRNAs. This chain is Methylenetetrahydrofolate--tRNA-(uracil-5-)-methyltransferase TrmFO, found in Bacillus cereus (strain AH820).